A 281-amino-acid chain; its full sequence is Cell growth regulator with EF hand domain protein 1 (281 aa).

An N-terminal signal peptide occupies residues 1-21 (MFQWLMQALMLPLLLLPLGRA). 2 EF-hand domains span residues 71 to 106 (DREQVLLSLFALHDYDQNGQLDGLELLSMLTAALAP) and 115 to 150 (PVILVVDSVLETQDLDGDGLMTPAELINFPEVPKHT). Asp-84, Asp-86, Asn-88, Gln-90, Glu-95, Asp-128, Asp-130, Asp-132, and Glu-139 together coordinate Ca(2+). The segment at 148-281 (KHTESLPPAL…HSIQLENDEI (134 aa)) is disordered. The segment covering 168–183 (LLANSPLQSETQQSLG) has biased composition (polar residues). The span at 184–213 (TKEEIRGQVEAKRASLEPEQEAGHQTEGKV) shows a compositional bias: basic and acidic residues. Ser-217 and Ser-228 each carry phosphoserine. Positions 237–256 (EGAEEQVEIKDNEGEAKELL) are enriched in basic and acidic residues.

Post-translationally, probably digested extracellularly by an unknown serine protease generating extremely hydrophobic bioactive peptides.

The protein localises to the secreted. Functionally, mediates cell-cell adhesion in a calcium-dependent manner. Able to inhibit growth in several cell lines. The polypeptide is Cell growth regulator with EF hand domain protein 1 (Mus musculus (Mouse)).